The primary structure comprises 58 residues: Ribosome biogenesis protein Nop10 (58 aa).

Belongs to the NOP10 family.

Involved in ribosome biogenesis; more specifically in 18S rRNA pseudouridylation and in cleavage of pre-rRNA. In Methanobrevibacter smithii (strain ATCC 35061 / DSM 861 / OCM 144 / PS), this protein is Ribosome biogenesis protein Nop10.